We begin with the raw amino-acid sequence, 267 residues long: Exopolysaccharide production negative regulator (267 aa).

Residues 1-23 (MVTSEFKLFKFMLMGMSIAVALA) form the signal peptide.

In terms of biological role, negatively modulates exopolysaccharide (EPS) biosynthesis. The polypeptide is Exopolysaccharide production negative regulator (exoR) (Rhizobium leguminosarum bv. viciae).